The primary structure comprises 403 residues: Malate dehydrogenase, chloroplastic (403 aa).

The N-terminal 80 residues, 1–80 (MATATSASLF…DKKPYGFKIN (80 aa)), are a transit peptide targeting the chloroplast. NAD(+) is bound by residues 89-95 (GAAGGIG) and D115. 2 residues coordinate substrate: R162 and R168. NAD(+) is bound by residues N175 and 198–200 (ISN). Residues N200 and R234 each contribute to the substrate site. H258 (proton acceptor) is an active-site residue. M309 contributes to the NAD(+) binding site.

It belongs to the LDH/MDH superfamily. MDH type 1 family. In terms of assembly, homodimer. As to expression, expressed in rosette leaves. Expressed in meristematic regions of roots and shoots, cotyledons, young leaves, trichomes, stamen, pollen, tapetum, gynoecium and ovules.

The protein resides in the plastid. The protein localises to the chloroplast stroma. The enzyme catalyses (S)-malate + NAD(+) = oxaloacetate + NADH + H(+). Functionally, catalyzes a reversible NAD-dependent dehydrogenase reaction involved in central metabolism and redox homeostasis between organelle compartments. Plays a key role in the metabolism of dark chloroplasts and non-green plastids. Essential for embryo viability. Plays an essential role in heterotrophic metabolism in embryos, and autotrophic metabolism in photosynthetic tissues as well. In Arabidopsis thaliana (Mouse-ear cress), this protein is Malate dehydrogenase, chloroplastic.